The chain runs to 95 residues: Bombyxin C-2 (95 aa).

Positions 1 to 19 (MKLVILLVVVSAMLVLGGA) are cleaved as a signal peptide. Pyrrolidone carboxylic acid is present on Gln20. 3 disulfides stabilise this stretch: Cys27-Cys76, Cys39-Cys89, and Cys75-Cys80. The propeptide at 47 to 67 (SGSQYAGYGWPWLPPFSSSRG) is c peptide like.

Belongs to the insulin family. As to quaternary structure, heterodimer of a B chain and an A chain linked by two disulfide bonds.

The protein localises to the secreted. Its function is as follows. Brain peptide responsible for activation of prothoracic glands to produce ecdysone in insects. This chain is Bombyxin C-2 (BBXC2), found in Bombyx mori (Silk moth).